We begin with the raw amino-acid sequence, 143 residues long: NADH-quinone oxidoreductase subunit A (143 aa).

Transmembrane regions (helical) follow at residues F8–T28, F63–W83, and F93–W113.

Belongs to the complex I subunit 3 family. NDH-1 is composed of 14 different subunits. Subunits NuoA, H, J, K, L, M, N constitute the membrane sector of the complex.

Its subcellular location is the cell inner membrane. The catalysed reaction is a quinone + NADH + 5 H(+)(in) = a quinol + NAD(+) + 4 H(+)(out). Functionally, NDH-1 shuttles electrons from NADH, via FMN and iron-sulfur (Fe-S) centers, to quinones in the respiratory chain. The immediate electron acceptor for the enzyme in this species is believed to be a menaquinone. Couples the redox reaction to proton translocation (for every two electrons transferred, four hydrogen ions are translocated across the cytoplasmic membrane), and thus conserves the redox energy in a proton gradient. This chain is NADH-quinone oxidoreductase subunit A, found in Pelodictyon phaeoclathratiforme (strain DSM 5477 / BU-1).